The sequence spans 113 residues: Pancreatic progenitor cell differentiation and proliferation factor B (113 aa).

The protein belongs to the PPDPF family.

Its function is as follows. Probable regulator of exocrine pancreas development. In Xenopus laevis (African clawed frog), this protein is Pancreatic progenitor cell differentiation and proliferation factor B (ppdpf-b).